The following is a 134-amino-acid chain: Transmembrane protein 100 (134 aa).

2 consecutive transmembrane segments (helical) span residues 56–76 (CIIP…AVAY) and 84–104 (IISI…ASSA). Phosphoserine is present on Ser121.

In terms of assembly, interacts (via C-terminus) with TRPA1 and TRPV1. Interacts with TASOR. In terms of tissue distribution, expressed in neurons of the myenteric and submucosal plexuses in the gastric body, jejunum and proximal colon. Expressed in arterial endothelial cells and neurons of the central nervous system and peripheral nervous system. Expressed in umbilical artery endothelial cells (at protein level).

Its subcellular location is the cell membrane. It localises to the membrane. The protein localises to the perikaryon. It is found in the cytoplasm. The protein resides in the perinuclear region. Its subcellular location is the endoplasmic reticulum. In terms of biological role, plays a role during embryonic arterial endothelium differentiation and vascular morphogenesis through the ACVRL1 receptor-dependent signaling pathway upon stimulation by bone morphogenetic proteins, such as GDF2/BMP9 and BMP10. Involved in the regulation of nociception, acting as a modulator of the interaction between TRPA1 and TRPV1, two molecular sensors and mediators of pain signals in dorsal root ganglia (DRG) neurons. Mechanistically, it weakens their interaction, thereby releasing the inhibition of TRPA1 by TRPV1 and increasing the single-channel open probability of the TRPA1-TRPV1 complex. This Homo sapiens (Human) protein is Transmembrane protein 100 (TMEM100).